Consider the following 496-residue polypeptide: Glutamyl-tRNA(Gln) amidotransferase subunit A (496 aa).

Residues K75 and S150 each act as charge relay system in the active site. S174 (acyl-ester intermediate) is an active-site residue.

Belongs to the amidase family. GatA subfamily. In terms of assembly, heterotrimer of A, B and C subunits.

It catalyses the reaction L-glutamyl-tRNA(Gln) + L-glutamine + ATP + H2O = L-glutaminyl-tRNA(Gln) + L-glutamate + ADP + phosphate + H(+). Allows the formation of correctly charged Gln-tRNA(Gln) through the transamidation of misacylated Glu-tRNA(Gln) in organisms which lack glutaminyl-tRNA synthetase. The reaction takes place in the presence of glutamine and ATP through an activated gamma-phospho-Glu-tRNA(Gln). The protein is Glutamyl-tRNA(Gln) amidotransferase subunit A of Burkholderia pseudomallei (strain 668).